Reading from the N-terminus, the 602-residue chain is Elongation factor 4 (602 aa).

Residues 7–189 enclose the tr-type G domain; the sequence is RKIRNFSIIA…AIVKNIPPPT (183 aa). Residues 19 to 24 and 136 to 139 each bind GTP; these read DHGKST and NKID.

The protein belongs to the TRAFAC class translation factor GTPase superfamily. Classic translation factor GTPase family. LepA subfamily.

The protein resides in the cell membrane. It carries out the reaction GTP + H2O = GDP + phosphate + H(+). Functionally, required for accurate and efficient protein synthesis under certain stress conditions. May act as a fidelity factor of the translation reaction, by catalyzing a one-codon backward translocation of tRNAs on improperly translocated ribosomes. Back-translocation proceeds from a post-translocation (POST) complex to a pre-translocation (PRE) complex, thus giving elongation factor G a second chance to translocate the tRNAs correctly. Binds to ribosomes in a GTP-dependent manner. The chain is Elongation factor 4 from Alkaliphilus metalliredigens (strain QYMF).